The following is a 199-amino-acid chain: Ribonuclease HII (199 aa).

The RNase H type-2 domain occupies 1-199 (MCVCGIDEAG…TYKNLVQGHI (199 aa)). Residues D7, E8, and D97 each contribute to the a divalent metal cation site.

This sequence belongs to the RNase HII family. The cofactor is Mn(2+). It depends on Mg(2+) as a cofactor.

The protein resides in the cytoplasm. The catalysed reaction is Endonucleolytic cleavage to 5'-phosphomonoester.. In terms of biological role, endonuclease that specifically degrades the RNA of RNA-DNA hybrids. This Picrophilus torridus (strain ATCC 700027 / DSM 9790 / JCM 10055 / NBRC 100828 / KAW 2/3) protein is Ribonuclease HII.